A 217-amino-acid polypeptide reads, in one-letter code: Large ribosomal subunit protein uL1 (217 aa).

An N-acetylserine modification is found at S2. Y11 carries the phosphotyrosine modification. K91 and K106 each carry N6-acetyllysine. Residue K118 is modified to N6-acetyllysine; alternate. K118 is covalently cross-linked (Glycyl lysine isopeptide (Lys-Gly) (interchain with G-Cter in SUMO1); alternate). A Glycyl lysine isopeptide (Lys-Gly) (interchain with G-Cter in SUMO2); alternate cross-link involves residue K118. Residue K161 forms a Glycyl lysine isopeptide (Lys-Gly) (interchain with G-Cter in SUMO2) linkage.

Belongs to the universal ribosomal protein uL1 family. As to quaternary structure, component of the large ribosomal subunit.

Its subcellular location is the cytoplasm. Component of the large ribosomal subunit. The ribosome is a large ribonucleoprotein complex responsible for the synthesis of proteins in the cell. This chain is Large ribosomal subunit protein uL1 (RPL10A), found in Bos taurus (Bovine).